The chain runs to 179 residues: UPF0303 protein P4H10.12 (179 aa).

The protein belongs to the UPF0303 family.

The protein is UPF0303 protein P4H10.12 of Schizosaccharomyces pombe (strain 972 / ATCC 24843) (Fission yeast).